Consider the following 151-residue polypeptide: Small ribosomal subunit protein uS13m (151 aa).

The protein belongs to the universal ribosomal protein uS13 family. In terms of assembly, component of the mitochondrial small ribosomal subunit (mt-SSU). Mature yeast 74S mitochondrial ribosomes consist of a small (37S) and a large (54S) subunit. The 37S small subunit contains a 15S ribosomal RNA (15S mt-rRNA) and at least 32 different proteins. The 54S large subunit contains a 21S rRNA (21S mt-rRNA) and at least 45 different proteins.

The protein localises to the mitochondrion. Its function is as follows. Component of the mitochondrial ribosome (mitoribosome), a dedicated translation machinery responsible for the synthesis of mitochondrial genome-encoded proteins, including at least some of the essential transmembrane subunits of the mitochondrial respiratory chain. The mitoribosomes are attached to the mitochondrial inner membrane and translation products are cotranslationally integrated into the membrane. This chain is Small ribosomal subunit protein uS13m (sws2), found in Schizosaccharomyces pombe (strain 972 / ATCC 24843) (Fission yeast).